The primary structure comprises 110 residues: Small ribosomal subunit protein bS18 (110 aa).

A compositionally biased stretch (low complexity) spans 1–18; that stretch reads MSEATTTTTTTSAPRPGG. The disordered stretch occupies residues 1–41; that stretch reads MSEATTTTTTTSAPRPGGRPSGPRPDRGPGGPRKKRPFQRR. Over residues 32 to 41 the composition is skewed to basic residues; it reads PRKKRPFQRR.

Belongs to the bacterial ribosomal protein bS18 family. In terms of assembly, part of the 30S ribosomal subunit. Forms a tight heterodimer with protein bS6.

Binds as a heterodimer with protein bS6 to the central domain of the 16S rRNA, where it helps stabilize the platform of the 30S subunit. The sequence is that of Small ribosomal subunit protein bS18 from Trichlorobacter lovleyi (strain ATCC BAA-1151 / DSM 17278 / SZ) (Geobacter lovleyi).